Here is a 526-residue protein sequence, read N- to C-terminus: Cytochrome P450 monooxygenase milC (526 aa).

The chain crosses the membrane as a helical span at residues 2–20 (AIHAAYIFIAATLIALYVA). Cys-470 is a binding site for heme.

Belongs to the cytochrome P450 family. Requires heme as cofactor.

Its subcellular location is the membrane. It carries out the reaction cordypyrone A + reduced [NADPH--hemoprotein reductase] + O2 = cordypyrone B + oxidized [NADPH--hemoprotein reductase] + H2O + H(+). It functions in the pathway secondary metabolite biosynthesis. Cytochrome P450 monooxygenase; part of the gene cluster that mediates the biosynthesis of cordypyrones A and B, 2 pyrones that show modest activities against pathogenic bacteria including methicillin-resistant Staphylococcus aureus (MRSA), Mycobacterium tuberculosis and Bacillus cereus. The HR-PKS milA catalyzes the formation of cordypyrones A via condensation of one acetate with 10 malonate units. Since milA lacks an enoyl reductase domain, the 2 beta-keto processing domains DH and KR of milA collaborate with the trans-enoyl reductase milB to catalyze the different levels of reduction. The cytochrome P450 monooxygenase milC then hydroxylates the C-22 of cordypyrones A to yield cordypyrones B. This is Cytochrome P450 monooxygenase milC from Cordyceps militaris (strain CM01) (Caterpillar fungus).